A 250-amino-acid polypeptide reads, in one-letter code: Carboxymethylproline synthase (250 aa).

60 to 64 (AGGDF) contacts malonyl-CoA.

The protein belongs to the enoyl-CoA hydratase/isomerase family. Homotrimer.

It carries out the reaction (S)-1-pyrroline-5-carboxylate + malonyl-CoA + H2O + H(+) = (2S,5S)-5-carboxymethylproline + CO2 + CoA. The protein operates within antibiotic biosynthesis; carbapenem biosynthesis. In terms of biological role, catalyzes the formation of (2S,5S)-carboxymethylproline (t-CMP) from malonyl-CoA and (S)-1-pyrroline-5-carboxylate, the first step in the biosynthesis of (5R)-carbapen-2-em-3-carboxylate, a beta-lactam antibiotic of the carbapenem class. Also catalyzes the independent decarboxylation of malonyl-CoA and methylmalonyl-CoA and the hydrolysis of CoA esters such as acetyl-CoA and propionyl-CoA. Catalyzes the reaction with a C2 epimeric mixture of methylmalonyl-CoA to give a 55:45 mixture of (6R)- and (6S)-epimers of 6-methyl-t-CMP, under standard incubation conditions. This chain is Carboxymethylproline synthase, found in Pectobacterium carotovorum subsp. carotovorum (Erwinia carotovora subsp. carotovora).